A 212-amino-acid chain; its full sequence is Cytidylate kinase (212 aa).

9-17 (GPAAAGKGT) lines the ATP pocket.

This sequence belongs to the cytidylate kinase family. Type 1 subfamily.

The protein resides in the cytoplasm. It catalyses the reaction CMP + ATP = CDP + ADP. The enzyme catalyses dCMP + ATP = dCDP + ADP. The chain is Cytidylate kinase from Rhizobium meliloti (strain 1021) (Ensifer meliloti).